We begin with the raw amino-acid sequence, 763 residues long: MSELLSVALFLASVLIYAWKAGRNTWWFAATLTVLGLFVILNITLYASDYFTGDGINDAVLYTLTNSLTGAGVGKYILPGIGIALALVAVFGALGWILRRRRHHPHHVGYSLLALLLALGSVDASPAFRQITELVKSQMRDGDPDFAVYYKEPAKTIPHPKLNLVYIYGESLERTYFDNDAFPNLTPELGALKNEGLDFSHTMQLPGTDYTIAGMVASQCGIPLFAPFEGNASASVSSFFPQNICLGDILKNSGYQNYFVQGANLRFAGKDVFLKSHGFDHLYGAEELKTVVADPSYRNDWGFYDDTVLDEAWKKFEALSRSGQRFSLFTLTVDTHHPDGFISRTCNRKRYDYDGKPNQSFSAVSCSQENIAEFINKIKASPWFKDTVIVVSSDHLAMNNTAWKYLNKQDRNNLFFILRGDKPQQETLAVKRNTMDNGATVLDILGGDNFIGLGRSSLSGQSLSEVFLNVKEKVLAMKPDIIRLWNFPKEIKDFTVDRDKNMIAFSGSHFRLPLLLRVSDKRVEPLPESEYSAPLRFQLADFAPRDNFVWIDRCYKMAQLWAPALALSTDWCVSQGQLGGQQTVQHVDKAQWQGKTAFKDTMIDMERYKGNVDTLKIVDNDIRYKADSFIFNVAGAPEEVKQFSGISRPESWGRWSNAQLGDEVKIEYKAPLPKKFDLVITAKAFGDNANRPIPVRVGNEEQTLVLGHDVSTITLHFNNPTDANTLVIAPPAPVSTNEGNILGHSPRKLGIGMVEIKVVNVEG.

The next 4 helical transmembrane spans lie at 1-21, 26-46, 77-97, and 108-128; these read MSEL…AWKA, WWFA…ITLY, ILPG…LGWI, and VGYS…SPAF.

The protein belongs to the OpgB family.

It localises to the cell inner membrane. It carries out the reaction a phosphatidylglycerol + a membrane-derived-oligosaccharide D-glucose = a 1,2-diacyl-sn-glycerol + a membrane-derived-oligosaccharide 6-(glycerophospho)-D-glucose.. It participates in glycan metabolism; osmoregulated periplasmic glucan (OPG) biosynthesis. Functionally, transfers a phosphoglycerol residue from phosphatidylglycerol to the membrane-bound nascent glucan backbones. The protein is Phosphoglycerol transferase I of Salmonella agona (strain SL483).